Consider the following 120-residue polypeptide: Large ribosomal subunit protein uL18 (120 aa).

The protein belongs to the universal ribosomal protein uL18 family. Part of the 50S ribosomal subunit; part of the 5S rRNA/L5/L18/L25 subcomplex. Contacts the 5S and 23S rRNAs.

This is one of the proteins that bind and probably mediate the attachment of the 5S RNA into the large ribosomal subunit, where it forms part of the central protuberance. In Janthinobacterium sp. (strain Marseille) (Minibacterium massiliensis), this protein is Large ribosomal subunit protein uL18.